A 237-amino-acid chain; its full sequence is Increased recombination centers protein 6 (237 aa).

The protein belongs to the IRC6 family.

Functionally, involved in gross chromosomal rearrangements (GCRs) and telomere healing. This Saccharomyces cerevisiae (strain ATCC 204508 / S288c) (Baker's yeast) protein is Increased recombination centers protein 6 (IRC6).